Consider the following 336-residue polypeptide: Protein REVEILLE 7-like (336 aa).

Positions 60–114 constitute an HTH myb-type domain; that stretch reads TVTKQREKWSEEEHDRFLEAIKLYGRGWRQIQEHIGTKTAVQIRSHAQKFFSKMA. A DNA-binding region (H-T-H motif) is located at residues 87–110; it reads WRQIQEHIGTKTAVQIRSHAQKFF. Residues 114-197 are disordered; sequence AQEADSRSEG…KQPFKDDSDI (84 aa). The segment covering 134–144 has biased composition (basic residues); the sequence is RPKRKPAHPYP. Residues 145–158 show a composition bias toward pro residues; that stretch reads RKSPVPYTQSPPPN. Positions 167-189 are enriched in polar residues; it reads KSPTSVLSSFGSEDQNNYTTSKQ.

It is found in the nucleus. In terms of biological role, probable transcription factor. The polypeptide is Protein REVEILLE 7-like (RVE7L) (Arabidopsis thaliana (Mouse-ear cress)).